The sequence spans 114 residues: Large ribosomal subunit protein bL17 (114 aa).

This sequence belongs to the bacterial ribosomal protein bL17 family. As to quaternary structure, part of the 50S ribosomal subunit. Contacts protein L32.

The sequence is that of Large ribosomal subunit protein bL17 from Halothermothrix orenii (strain H 168 / OCM 544 / DSM 9562).